A 287-amino-acid chain; its full sequence is MPIILENISVFYSRNTPLEISALKDVNLRIEKGEFVGILGEKGAGKSTLIKLFNGLLRPDSGRITVNGLDPSSKKVKSRVGMVFQQPADQLFCRTVYEEIAFGPLNFGYSRKETEERVFEALEAASLERSMLSRDPLSLSGGEMQRVALAGALALRPDYLVLDEPITGLDPAGKKEILETLKKIKGQGTTIITVTHNLKGFFPLLERIVLIKEGRISFQGSRKEYMETENVPLPPVASMMRELHSRGIQVNPAVFTVEEALKEILRVKSMIEKEKAEKERAEKQTKK.

The ABC transporter domain maps to 5-238; the sequence is LENISVFYSR…ENVPLPPVAS (234 aa). An ATP-binding site is contributed by 40–47; sequence GEKGAGKS.

It belongs to the ABC transporter superfamily.

Its subcellular location is the cell membrane. Functionally, probably part of an ABC transporter complex. Responsible for energy coupling to the transport system. The chain is Putative ABC transporter ATP-binding protein MM_1038 from Methanosarcina mazei (strain ATCC BAA-159 / DSM 3647 / Goe1 / Go1 / JCM 11833 / OCM 88) (Methanosarcina frisia).